The primary structure comprises 89 residues: Small ribosomal subunit protein uS15 (89 aa).

This sequence belongs to the universal ribosomal protein uS15 family. Part of the 30S ribosomal subunit. Forms a bridge to the 50S subunit in the 70S ribosome, contacting the 23S rRNA.

Its function is as follows. One of the primary rRNA binding proteins, it binds directly to 16S rRNA where it helps nucleate assembly of the platform of the 30S subunit by binding and bridging several RNA helices of the 16S rRNA. In terms of biological role, forms an intersubunit bridge (bridge B4) with the 23S rRNA of the 50S subunit in the ribosome. The sequence is that of Small ribosomal subunit protein uS15 from Corynebacterium aurimucosum (strain ATCC 700975 / DSM 44827 / CIP 107346 / CN-1) (Corynebacterium nigricans).